The chain runs to 81 residues: Cell division protein ZapB (81 aa).

The stretch at 5–81 (LEVFEKLESK…QALLGRMEEV (77 aa)) forms a coiled coil. The interval 43 to 64 (VHSAQNGREELERENQQLREQQ) is disordered. Residues 49–59 (GREELERENQQ) show a composition bias toward basic and acidic residues.

This sequence belongs to the ZapB family. As to quaternary structure, homodimer. The ends of the coiled-coil dimer bind to each other, forming polymers. Interacts with FtsZ.

The protein localises to the cytoplasm. In terms of biological role, non-essential, abundant cell division factor that is required for proper Z-ring formation. It is recruited early to the divisome by direct interaction with FtsZ, stimulating Z-ring assembly and thereby promoting cell division earlier in the cell cycle. Its recruitment to the Z-ring requires functional FtsA or ZipA. This chain is Cell division protein ZapB, found in Enterobacter sp. (strain 638).